The primary structure comprises 621 residues: Na(+)/H(+) antiporter NhaA (621 aa).

The interval 1–430 (MPASSFGESS…LGWLIFKVAA (430 aa)) is na(+)/H(+) antiporter NhaA. A run of 11 helical transmembrane segments spans residues 27–47 (GAAV…NSPL), 72–92 (LHHW…GLEV), 109–129 (LALI…VLIV), 139–159 (GWGA…AIVG), 168–188 (VFLL…IGIV), 192–212 (EIRI…WLLG), 223–243 (VLIV…ASLA), 300–320 (FLRL…NAGV), 339–359 (VIAG…LVAV), 375–395 (VFGG…IIGL), and 409–429 (VGVL…FKVA). Residues 431–578 (QRWGEKTADL…VERDLASAVA (148 aa)) form the Thioredoxin domain.

This sequence in the N-terminal section; belongs to the NhaA Na(+)/H(+) (TC 2.A.33) antiporter family.

Its subcellular location is the cell inner membrane. It catalyses the reaction Na(+)(in) + 2 H(+)(out) = Na(+)(out) + 2 H(+)(in). Its function is as follows. Na(+)/H(+) antiporter that extrudes sodium in exchange for external protons. This Herminiimonas arsenicoxydans protein is Na(+)/H(+) antiporter NhaA.